We begin with the raw amino-acid sequence, 263 residues long: uncharacterized protein (263 aa).

The WD repeat unit spans residues 53–89; sequence SAVTASKFSPDGRWLVNLTDQGYVQLWDVHKGERVKT.

This is an uncharacterized protein from Deinococcus radiodurans (strain ATCC 13939 / DSM 20539 / JCM 16871 / CCUG 27074 / LMG 4051 / NBRC 15346 / NCIMB 9279 / VKM B-1422 / R1).